The sequence spans 105 residues: UPF0251 protein AF_0666 (105 aa).

This sequence belongs to the UPF0251 family.

This is UPF0251 protein AF_0666 from Archaeoglobus fulgidus (strain ATCC 49558 / DSM 4304 / JCM 9628 / NBRC 100126 / VC-16).